We begin with the raw amino-acid sequence, 760 residues long: General transcription and DNA repair factor IIH helicase subunit XPD (760 aa).

In terms of domain architecture, Helicase ATP-binding spans 7 to 283 (GLLVYFPYDY…KETDEQRLRD (277 aa)). 42-49 (MPSGTGKT) contacts ATP. [4Fe-4S] cluster-binding residues include cysteine 116, cysteine 134, cysteine 155, and cysteine 190. A DEAH box motif is present at residues 234-237 (DEAH). The mediates interaction with MMS19 stretch occupies residues 438–637 (MDASLAIKPV…TQSRILKARL (200 aa)). The Nuclear localization signal motif lies at 682–695 (KRFARADKRGKLPR).

It belongs to the helicase family. RAD3/XPD subfamily. In terms of assembly, component of the 7-subunit TFIIH core complex composed of XPB/ERCC3, XPD/ERCC2, GTF2H1, GTF2H2, GTF2H3, GTF2H4 and GTF2H5, which is active in NER. The core complex associates with the 3-subunit CDK-activating kinase (CAK) module composed of CCNH/cyclin H, CDK7 and MNAT1 to form the 10-subunit holoenzyme (holo-TFIIH) active in transcription. The interaction with GTF2H2 results in the stimulation of the 5'--&gt;3' helicase activity. Component of the MMXD complex, which includes CIAO1, ERCC2, CIAO2B, MMS19 and SLC25A5. Interacts with CIAO1 and CIAO2B; the interaction WITH CIAO2B is direct. Interacts with ATF7IP. Interacts directly with MMS19. Part of TBP-based Pol II pre-initiation complex (PIC), in which Pol II core assembles with general transcription factors and other specific initiation factors including GTF2E1, GTF2E2, GTF2F1, GTF2F2, TCEA1, ERCC2, ERCC3, GTF2H2, GTF2H3, GTF2H4, GTF2H5, GTF2A1, GTF2A2, GTF2B and TBP; this large multi-subunit PIC complex mediates DNA unwinding and targets Pol II core to the transcription start site where the first phosphodiester bond forms. The cofactor is Mg(2+). Requires [4Fe-4S] cluster as cofactor. Post-translationally, ISGylated.

The protein resides in the nucleus. It localises to the cytoplasm. Its subcellular location is the cytoskeleton. The protein localises to the spindle. The enzyme catalyses Couples ATP hydrolysis with the unwinding of duplex DNA at the replication fork by translocating in the 5'-3' direction. This creates two antiparallel DNA single strands (ssDNA). The leading ssDNA polymer is the template for DNA polymerase III holoenzyme which synthesizes a continuous strand.. It catalyses the reaction ATP + H2O = ADP + phosphate + H(+). In terms of biological role, ATP-dependent 5'-3' DNA helicase. Component of the general transcription and DNA repair factor IIH (TFIIH) core complex which is involved in general and transcription-coupled nucleotide excision repair (NER) of damaged DNA. When complexed to CDK-activating kinase (CAK), involved in transcription by RNA polymerase II. In NER, TFIIH acts by opening DNA around the lesion to allow the excision of the damaged oligonucleotide and its replacement by a new DNA fragment. The ATP-dependent helicase activity of XPD/ERCC2 is required for DNA opening. In transcription, TFIIH has an essential role in transcription initiation. When the pre-initiation complex (PIC) has been established, TFIIH is required for promoter opening and promoter escape. Phosphorylation of the C-terminal tail (CTD) of the largest subunit of RNA polymerase II by the kinase module CAK controls the initiation of transcription. XPD/ERCC2 acts by forming a bridge between CAK and the core-TFIIH complex. Involved in the regulation of vitamin-D receptor activity. As part of the mitotic spindle-associated MMXD complex it plays a role in chromosome segregation. Might have a role in aging process and could play a causative role in the generation of skin cancers. This is General transcription and DNA repair factor IIH helicase subunit XPD from Cricetulus griseus (Chinese hamster).